The chain runs to 160 residues: Putative pre-16S rRNA nuclease (160 aa).

This sequence belongs to the YqgF nuclease family.

It is found in the cytoplasm. Functionally, could be a nuclease involved in processing of the 5'-end of pre-16S rRNA. In Cutibacterium acnes (strain DSM 16379 / KPA171202) (Propionibacterium acnes), this protein is Putative pre-16S rRNA nuclease.